A 189-amino-acid polypeptide reads, in one-letter code: Alanine and glycine-rich protein (189 aa).

Residues 127 to 160 are compositionally biased toward gly residues; sequence AGAGGGSGGGGGGGSGSGGSGGSGGSGGSGGNDG. A disordered region spans residues 127–170; it reads AGAGGGSGGGGGGGSGSGGSGGSGGSGGSGGNDGNDGNDGSSSR.

Component of the organic matrix of calcified shell layers like nacre and prisms.

It is found in the secreted. The polypeptide is Alanine and glycine-rich protein (Mytilus californianus (California mussel)).